Here is a 150-residue protein sequence, read N- to C-terminus: Flagellar assembly factor FliW (150 aa).

Belongs to the FliW family. In terms of assembly, interacts with translational regulator CsrA and flagellin(s).

The protein localises to the cytoplasm. Acts as an anti-CsrA protein, binds CsrA and prevents it from repressing translation of its target genes, one of which is flagellin. Binds to flagellin and participates in the assembly of the flagellum. The sequence is that of Flagellar assembly factor FliW from Thermoanaerobacter pseudethanolicus (strain ATCC 33223 / 39E) (Clostridium thermohydrosulfuricum).